Consider the following 540-residue polypeptide: Cytochrome P450 monooxygenase prx8 (540 aa).

The chain crosses the membrane as a helical span at residues 50–68; sequence ALGAAIALFACACAYALVA. Asn460 carries N-linked (GlcNAc...) asparagine glycosylation. Cys483 lines the heme pocket.

It belongs to the cytochrome P450 family. Heme is required as a cofactor.

It is found in the membrane. The protein operates within sesquiterpene biosynthesis. Cytochrome P450 monooxygenase; part of the gene cluster that mediates the biosynthesis of PR-toxin, a bicyclic sesquiterpene belonging to the eremophilane class and acting as a mycotoxin. The first step of the pathway is catalyzed by the aristolochene synthase which performs the cyclization of trans,trans-farnesyl diphosphate (FPP) to the bicyclic sesquiterpene aristolochene. Following the formation of aristolochene, the non-oxygenated aristolochene is converted to the trioxygenated intermediate eremofortin B, via 7-epi-neopetasone. This conversion appears to involve three enzymes, a hydroxysterol oxidase-like enzyme, the quinone-oxidase prx3 that forms the quinone-type-structure in the bicyclic nucleus of aristolochene with the C8-oxo group and the C-3 hydroxyl group, and the P450 monooxygenase prx9 that introduces the epoxide at the double bond between carbons 1 and 2. No monoxy or dioxy-intermediates have been reported to be released to the broth, so these three early oxidative reactions may be coupled together. Eremofortin B is further oxidized by another P450 monooxygenase, that introduces a second epoxide between carbons 7 and 11 prior to acetylation to eremofortin A by the acetyltransferase prx11. The second epoxidation may be performed by a second P450 monooxygenase. After the acetylation step, eremofortin A is converted to eremofortin C and then to PR-toxin. First the conversion of eremofortin A to eremofortin C proceeds by oxidation of the side chain of the molecule at C-12 and is catalyzed by the short-chain oxidoreductase prx1. The cytochrome P450 monooxygenase prx8 also plays a role in this step. The primary alcohol formed at C-12 is finally oxidized by the short-chain alcohol dehydrogenase prx4 that forms PR-toxin. This is Cytochrome P450 monooxygenase prx8 from Penicillium rubens (strain ATCC 28089 / DSM 1075 / NRRL 1951 / Wisconsin 54-1255) (Penicillium chrysogenum).